The primary structure comprises 173 residues: Alpha-crystallin A chain (173 aa).

M1 carries the post-translational modification N-acetylmethionine. The segment at 1–63 (MDIAIQQPWF…RTVLDSGVSE (63 aa)) is required for complex formation with BFSP1 and BFSP2. Q6 carries the post-translational modification Deamidated glutamine; partial. S45 is subject to Phosphoserine. Q50 is modified (deamidated glutamine; partial). The sHSP domain occupies 52-162 (LFRTVLDSGV…GHSERAIPVS (111 aa)). An N6-acetyllysine mark is found at K70 and K99. Position 100 (H100) interacts with Zn(2+). Position 101 is a deamidated asparagine; partial (N101). Zn(2+) is bound by residues E102 and H107. At S122 the chain carries Phosphoserine. N123 bears the Deamidated asparagine; partial mark. Positions 144–173 (PKVPSGVDAGHSERAIPVSREEKPSSAPSS) are disordered. Residues 153 to 167 (GHSERAIPVSREEKP) show a composition bias toward basic and acidic residues. H154 is a Zn(2+) binding site. The O-linked (GlcNAc) serine glycan is linked to S162.

This sequence belongs to the small heat shock protein (HSP20) family. In terms of assembly, heteromer composed of three CRYAA and one CRYAB subunits. Inter-subunit bridging via zinc ions enhances stability, which is crucial as there is no protein turn over in the lens. Can also form homodimers and homotetramers (dimers of dimers) which serve as the building blocks of homooligomers. Within homooligomers, the zinc-binding motif is created from residues of 3 different molecules. His-100 and Glu-102 from one molecule are ligands of the zinc ion, and His-107 and His-154 residues from additional molecules complete the site with tetrahedral coordination geometry. Part of a complex required for lens intermediate filament formation composed of BFSP1, BFSP2 and CRYAA. Acetylation at Lys-70 may increase chaperone activity. In terms of processing, undergoes age-dependent proteolytical cleavage at the C-terminus.

It is found in the cytoplasm. The protein localises to the nucleus. In terms of biological role, contributes to the transparency and refractive index of the lens. Acts as a chaperone, preventing aggregation of various proteins under a wide range of stress conditions. Required for the correct formation of lens intermediate filaments as part of a complex composed of BFSP1, BFSP2 and CRYAA. The chain is Alpha-crystallin A chain (CRYAA) from Neovison vison (American mink).